The following is an 800-amino-acid chain: Endoglucanase (800 aa).

The first 30 residues, 1–30 (MMLRKKTKQLISSILILVLLLSLFPTALAA), serve as a signal peptide directing secretion. Glu-190 serves as the catalytic Proton donor. The Nucleophile role is filled by Glu-305. Positions 761–800 (AATTEPVEPEPVDPGEETPPVDEKEAKTEQKEAEKEEKEE) are disordered. The segment covering 767 to 780 (VEPEPVDPGEETPP) has biased composition (acidic residues). Residues 781–800 (VDEKEAKTEQKEAEKEEKEE) show a composition bias toward basic and acidic residues.

This sequence belongs to the glycosyl hydrolase 5 (cellulase A) family.

The catalysed reaction is Endohydrolysis of (1-&gt;4)-beta-D-glucosidic linkages in cellulose, lichenin and cereal beta-D-glucans.. This is Endoglucanase from Halalkalibacter akibai (strain ATCC 43226 / DSM 21942 / CIP 109018 / JCM 9157 / 1139) (Bacillus akibai).